The primary structure comprises 501 residues: Probable cytochrome P450 6t3 (501 aa).

Cys-444 lines the heme pocket.

The protein belongs to the cytochrome P450 family. Requires heme as cofactor.

The protein localises to the endoplasmic reticulum membrane. The protein resides in the microsome membrane. In terms of biological role, may be involved in the metabolism of insect hormones and in the breakdown of synthetic insecticides. This is Probable cytochrome P450 6t3 (Cyp6t3) from Drosophila melanogaster (Fruit fly).